The chain runs to 100 residues: Large ribosomal subunit protein uL23 (100 aa).

The protein belongs to the universal ribosomal protein uL23 family. As to quaternary structure, part of the 50S ribosomal subunit. Contacts protein L29, and trigger factor when it is bound to the ribosome.

One of the early assembly proteins it binds 23S rRNA. One of the proteins that surrounds the polypeptide exit tunnel on the outside of the ribosome. Forms the main docking site for trigger factor binding to the ribosome. In Prochlorococcus marinus subsp. pastoris (strain CCMP1986 / NIES-2087 / MED4), this protein is Large ribosomal subunit protein uL23.